The chain runs to 1189 residues: MRAVPTWVDKVHDRDKLEQSIYDLAFKPDGTQLIVAAGNRVLVYDTSDGTMIQPLKGHKDTVYCVAYAKDGKRFASGSADKSVIIWTSKLEGILKYTHNDSIQCVSYNPVTHQLASCSSSDFGLWSPEQKSVSKHKVSSKITCCSWTNDGQYLALGMFNGVVSIRNKNGEEKVKIERPGGALSPIWSICWNPSKDDHNDILAVADWGQKLSFYQLSGKQVGKDRVLGFDPCCVSYFSKGEYIIVSGSDKQVSLFTKDGVRLGPIGEQNSWVWTCRVKPDSNYVVIGCQDGTLAFYQLIFSTVHGLYKDRYAYRDSMTDVIVQHLITEQKVRIKCRELVKKIAIYKNRLAIQMPEKILIYELFSDDVNDMHYRVKEKIVKKFECNLLVVCSHHIILCQEKRLQCLSFKGVKEREWMMESLIRYIKVIGGPAGREGLLVGLKNGQILKIFVDNPFAITLLKQATSVRCLDMSASRNKLAVVDEHNTCLVYDITTKDLLFQEPNANSVAWNTQCEDMLCFSGGGYLNIKASNFPVHQQKLQGFVVGYNGSKIFCLHVYSMSAVEVPQSAPMYQYLERKMFREAYQIACLGVTDLDWKELAMEALEGLDFETAKKAFIRVRDLRYLELINSIEERKKRGDANDNLFLADVFAYQGKFHEAAKLYKKAGQESRALDMYTDLRMFEFAKEFLGSGDPKDTKTLITKQADWARNIREPRTAAEMYLSAGENMKAIELSGDHGWVDMLIEIARKLDKAEREPLLKCAYYFKKLQHHGYAAETYMKIGDLKALVRLYVETQRWEEAFALVEKNPEYKDEVYIPYAQWLAEHDRFEEAQKAFHKAGRQDEAVRVLEQLTHNAVVESRFNDAAYYYWMLSMQCLEISKDKEEKQDAMLQKFYHFQHLAELYHVYHSIHRYTDEPFSSHLPETLFNISRFLLHSLTKESPLGISKVNTLFTLAKQSKALGAYKLARQVYERLQGLRIPSRFLESIELGSITIRSKPFHDSEELIPMCYRCSTNNPFLNNLGNVCINCRQRFVFSASSYEVLPLVEFYLEDGISDEEAVSLVDLEAPRSSSKADSWREMSSGDTQTLRLDDGDDMMTYDPFTAKLSFEQGGSEFVPVVVNRAVLRTMSRRDVLIKRWPLPLKWQYFRSLLPDVSITMCPSCFQMFHTEDYELLVLQHNCCPYCRRPIEESSQ.

8 WD repeats span residues 16 to 54, 57 to 97, 99 to 135, 137 to 175, 180 to 223, 225 to 264, 266 to 306, and 459 to 498; these read KLEQ…MIQP, GHKD…LKYT, NDSI…VSKH, VSSK…KVKI, GALS…VGKD, VLGF…LGPI, EQNS…HGLY, and KQAT…LLFQ.

In terms of assembly, component of the IFT complex A (IFT-A) complex.

The protein localises to the cell projection. Its subcellular location is the cilium. It localises to the cytoplasm. The protein resides in the cytoskeleton. It is found in the cilium basal body. Required for cilia formation during embryonal development. Acts as a negative regulator of Shh signaling. The chain is Intraflagellar transport protein 122 homolog (ift122) from Xenopus tropicalis (Western clawed frog).